Consider the following 119-residue polypeptide: Large ribosomal subunit protein bL20 (119 aa).

This sequence belongs to the bacterial ribosomal protein bL20 family.

Binds directly to 23S ribosomal RNA and is necessary for the in vitro assembly process of the 50S ribosomal subunit. It is not involved in the protein synthesizing functions of that subunit. This is Large ribosomal subunit protein bL20 from Nitrobacter winogradskyi (strain ATCC 25391 / DSM 10237 / CIP 104748 / NCIMB 11846 / Nb-255).